The following is a 552-amino-acid chain: CTP synthase (552 aa).

The amidoligase domain stretch occupies residues 1–267 (MSKFVFVTGG…AHQTLELLRM (267 aa)). Serine 13 is a CTP binding site. Residue serine 13 coordinates UTP. Residues 14 to 19 (SIGKGI) and aspartate 71 contribute to the ATP site. Positions 71 and 141 each coordinate Mg(2+). CTP contacts are provided by residues 148-150 (DIE), 188-193 (KTKPTQ), and lysine 224. UTP contacts are provided by residues 188-193 (KTKPTQ) and lysine 224. The Glutamine amidotransferase type-1 domain maps to 292-534 (TVALVGKYVQ…INAVLKRRNA (243 aa)). L-glutamine is bound at residue glycine 354. Catalysis depends on cysteine 381, which acts as the Nucleophile; for glutamine hydrolysis. L-glutamine-binding positions include 382–385 (LGMQ), glutamate 405, and arginine 462. Residues histidine 507 and glutamate 509 contribute to the active site.

This sequence belongs to the CTP synthase family. Homotetramer.

It catalyses the reaction UTP + L-glutamine + ATP + H2O = CTP + L-glutamate + ADP + phosphate + 2 H(+). The enzyme catalyses L-glutamine + H2O = L-glutamate + NH4(+). The catalysed reaction is UTP + NH4(+) + ATP = CTP + ADP + phosphate + 2 H(+). Its pathway is pyrimidine metabolism; CTP biosynthesis via de novo pathway; CTP from UDP: step 2/2. Allosterically activated by GTP, when glutamine is the substrate; GTP has no effect on the reaction when ammonia is the substrate. The allosteric effector GTP functions by stabilizing the protein conformation that binds the tetrahedral intermediate(s) formed during glutamine hydrolysis. Inhibited by the product CTP, via allosteric rather than competitive inhibition. Catalyzes the ATP-dependent amination of UTP to CTP with either L-glutamine or ammonia as the source of nitrogen. Regulates intracellular CTP levels through interactions with the four ribonucleotide triphosphates. The protein is CTP synthase of Synechocystis sp. (strain ATCC 27184 / PCC 6803 / Kazusa).